We begin with the raw amino-acid sequence, 136 residues long: Translation initiation factor 5A (136 aa).

K37 carries the post-translational modification Hypusine.

It belongs to the eIF-5A family.

The protein resides in the cytoplasm. In terms of biological role, functions by promoting the formation of the first peptide bond. This is Translation initiation factor 5A (eIF5A) from Thermococcus gammatolerans (strain DSM 15229 / JCM 11827 / EJ3).